The chain runs to 59 residues: Large ribosomal subunit protein uL30 (59 aa).

It belongs to the universal ribosomal protein uL30 family. In terms of assembly, part of the 50S ribosomal subunit.

In Enterobacter sp. (strain 638), this protein is Large ribosomal subunit protein uL30.